We begin with the raw amino-acid sequence, 653 residues long: Poly [ADP-ribose] polymerase 2 (653 aa).

The SAP 1 domain maps to 2–36 (SARLRVADVRAELQRRGLDVSGTKPALVRRLDAAI). The interval 64-84 (NCGNNKRKRSGDGGEEGNGDT) is disordered. The Nuclear localization signal motif lies at 69–72 (KRKR). The SAP 2 domain occupies 91–125 (LEGMSYRELQGLAKARGVAANGGKKDVIQRLLSAT). The WGR domain maps to 179–276 (NYHVLQVGDE…KNFKCYAKKY (98 aa)). Residues 301–419 (ETKLETRIAQ…EIEIATKLLE (119 aa)) enclose the PARP alpha-helical domain. A PARP catalytic domain is found at 427-653 (DPLYARYKQL…LHVNFNFKRR (227 aa)).

The protein belongs to the ARTD/PARP family.

It is found in the nucleus. It carries out the reaction NAD(+) + (ADP-D-ribosyl)n-acceptor = nicotinamide + (ADP-D-ribosyl)n+1-acceptor + H(+).. The enzyme catalyses L-aspartyl-[protein] + NAD(+) = 4-O-(ADP-D-ribosyl)-L-aspartyl-[protein] + nicotinamide. It catalyses the reaction L-glutamyl-[protein] + NAD(+) = 5-O-(ADP-D-ribosyl)-L-glutamyl-[protein] + nicotinamide. Involved in the base excision repair (BER) pathway, by catalyzing the poly(ADP-ribosyl)ation of a limited number of acceptor proteins involved in chromatin architecture and in DNA metabolism. This modification follows DNA damages and appears as an obligatory step in a detection/signaling pathway leading to the reparation of DNA strand breaks. In Zea mays (Maize), this protein is Poly [ADP-ribose] polymerase 2 (PARP2).